Reading from the N-terminus, the 318-residue chain is Decaprenyl-phosphate phosphoribosyltransferase (318 aa).

A run of 2 helical transmembrane segments spans residues 33-53 (WIKN…GIEY) and 59-79 (AAKV…IYLI). Residues lysine 35 and tyrosine 77 each coordinate 5-phospho-alpha-D-ribose 1-diphosphate. Mg(2+) is bound by residues asparagine 80 and aspartate 84. Lysine 94 serves as a coordination point for 5-phospho-alpha-D-ribose 1-diphosphate. A run of 2 helical transmembrane segments spans residues 99-119 (IAAG…LAVA) and 121-141 (LVIS…YIAV). The 5-phospho-alpha-D-ribose 1-diphosphate site is built by lysine 150 and arginine 167. The next 2 helical transmembrane spans lie at 153–173 (AVLD…AGGV) and 177–197 (IPLS…MAAG). Lysine 198 lines the trans,octa-cis-decaprenyl phosphate pocket. A run of 3 helical transmembrane segments spans residues 225–245 (LRFV…LWAF), 262–282 (SWYA…AVDI), and 298–318 (RVLQ…IYFS).

It belongs to the UbiA prenyltransferase family. DPPR synthase subfamily. Mg(2+) is required as a cofactor.

The protein localises to the cell inner membrane. It catalyses the reaction trans,octa-cis-decaprenyl phosphate + 5-phospho-alpha-D-ribose 1-diphosphate + H(+) = trans,octa-cis-decaprenylphospho-beta-D-ribofuranose 5-phosphate + diphosphate. Its pathway is cell wall biogenesis; cell wall polysaccharide biosynthesis. Its function is as follows. Involved in the biosynthesis of decaprenylphosphoryl arabinose (DPA) a precursor for arabinan synthesis in mycobacterial cell wall biosynthesis. Catalyzes the transfer of a 5-phosphoribosyl residue from phosphoribose diphosphate (PRPP) to decaprenyl phosphate (DP) to form decaprenylphosphoryl-5-phosphoribose (DPPR). The chain is Decaprenyl-phosphate phosphoribosyltransferase from Mycolicibacterium smegmatis (strain ATCC 700084 / mc(2)155) (Mycobacterium smegmatis).